A 673-amino-acid chain; its full sequence is Probable boron transporter 7 (673 aa).

Over 1–35 (MEGVKFPFGGIINDFNGRRKCYKQDWLAAFNSGVR) the chain is Cytoplasmic. The chain crosses the membrane as a helical span at residues 36–56 (ILAPTLYIFIASALPVIAFGE). The Extracellular portion of the chain corresponds to 57–75 (QLSRETDRSLGIAESLAST). The helical transmembrane segment at 76 to 96 (ALCGIIHSVFGGQPLLIVGVA) threads the bilayer. The Cytoplasmic portion of the chain corresponds to 97 to 121 (EPTIIMYTYLHSFSKSRPELGQKLY). A helical membrane pass occupies residues 122–142 (LAWAGWVCVWTAVLLMLLAML). At 143-160 (NACNIISRFTRIAGELFG) the chain is on the extracellular side. The helical transmembrane segment at 161–181 (MLITVLFIQEAVKGLIGEFLV) threads the bilayer. The Cytoplasmic portion of the chain corresponds to 182-197 (PKSDDPSLEVYQFQWR). A helical membrane pass occupies residues 198 to 218 (YTNGLLAVIFSFGLLYTALKS). Residues 219-233 (RRARSWKYGFRWMRG) lie on the Extracellular side of the membrane. Residues 234-254 (FIGDYGTLLMLVLWSAFSYTV) traverse the membrane as a helical segment. Residues 255 to 289 (PRNLPEGVPRRLELPLPWASESLYHWTVVKDMAKV) lie on the Cytoplasmic side of the membrane. A helical membrane pass occupies residues 290-310 (PPLYILAAFIPAIMIAGLYFF). At 311-330 (DHCVSAQMAQQKEFNLKNPT) the chain is on the extracellular side. Residues 331-351 (AYHYDIFILGIMTLICGLLGL) form a helical membrane-spanning segment. Over 352-468 (PPSNGVIPQS…EQRVSNLLQS (117 aa)) the chain is Cytoplasmic. The chain crosses the membrane as a helical span at residues 469–489 (VLVGLLILAVPVLRMIPTSVL). Over 490–556 (WGYFTYMAVD…QLLYFLICYG (67 aa)) the chain is Extracellular. A helical membrane pass occupies residues 557-577 (VTWIPVGGILFPLPFFILIAL). The Cytoplasmic portion of the chain corresponds to 578–673 (RQYILQRLFD…SQMVKIYNHS (96 aa)).

It belongs to the anion exchanger (TC 2.A.31.3) family.

It is found in the membrane. Its function is as follows. Putative boron transporter. Boron is essential for maintaining the integrity of plants cell walls. The polypeptide is Probable boron transporter 7 (BOR7) (Arabidopsis thaliana (Mouse-ear cress)).